Here is a 187-residue protein sequence, read N- to C-terminus: UPF0301 protein YPO0936/y3322/YP_3506 (187 aa).

The protein belongs to the UPF0301 (AlgH) family.

This is UPF0301 protein YPO0936/y3322/YP_3506 from Yersinia pestis.